The primary structure comprises 426 residues: Histone deacetylase 9 (426 aa).

Residues 6 to 318 (KISYFYDGDV…WTVETGILLD (313 aa)) form a histone deacetylase region. His-137 (proton donor/acceptor) is an active-site residue. Residues Asp-172, His-174, and Asp-261 each contribute to the Zn(2+) site. The tract at residues 383–426 (PDFYIPDFDEDEQNPDVRADQRSRDKQIQRDDEYFDGDNDNDAS) is disordered. Residues 397–414 (PDVRADQRSRDKQIQRDD) are compositionally biased toward basic and acidic residues. Residues 415–426 (EYFDGDNDNDAS) show a composition bias toward acidic residues.

The protein belongs to the histone deacetylase family. HD type 1 subfamily. As to quaternary structure, interacts with AHL22. Binds to farnesylated ASG2 in the cytosol. Requires Zn(2+) as cofactor.

It localises to the nucleus. Its subcellular location is the cytoplasm. The protein localises to the cytosol. The catalysed reaction is N(6)-acetyl-L-lysyl-[histone] + H2O = L-lysyl-[histone] + acetate. Responsible for the deacetylation of lysine residues on the N-terminal part of the core histones (H2A, H2B, H3 and H4). Histone deacetylation gives a tag for epigenetic repression and plays an important role in transcriptional regulation, cell cycle progression and developmental events. Histone deacetylases act via the formation of large multiprotein complexes. The polypeptide is Histone deacetylase 9 (HDA9) (Arabidopsis thaliana (Mouse-ear cress)).